The following is a 335-amino-acid chain: Large ribosomal subunit protein uL3 (335 aa).

The segment at 1–20 is disordered; that stretch reads MATIHRPRRGSLAFSPRKRA.

Belongs to the universal ribosomal protein uL3 family. In terms of assembly, part of the 50S ribosomal subunit. Forms a cluster with proteins L14 and L24e.

In terms of biological role, one of the primary rRNA binding proteins, it binds directly near the 3'-end of the 23S rRNA, where it nucleates assembly of the 50S subunit. This Methanothrix harundinacea (strain 6Ac) (Methanosaeta harundinacea) protein is Large ribosomal subunit protein uL3 (rpl3).